The primary structure comprises 360 residues: MLVWLAEYLVQYNTAFNVVSYITFRAIMALLTAMGIGLWIGPEVIRRLQLLKFGQEVRNDGPESHFKKRGTPTMGGIMILIAIGVSTLLWADLRNSYVWFVLFVLFGYGAVGFVDDYWKIKRKNTDGLIARWKYFWLSVIALIAVFGIYAVGKDTAATQLVVPFFKDFMPQLGIFFIILSYFVIVGTSNAVNLTDGLDGLAIVPTIMVASAFALIAWATGNFNFAQYLHIPFVPNAGELVILCTAIVGAGLGFLWYNTYPAQVFMGDVGSLSLGGALGTIAVLVRQELLLVIMGGVFVVEALSVILQVGSYKLRQKRIFRMAPIHHHFELKGWPEPRVIVRFWIITLMLVLIGLVTLKLR.

Transmembrane regions (helical) follow at residues 21–41 (YITF…LWIG), 73–93 (TMGG…WADL), 98–118 (VWFV…DDYW), 132–152 (WKYF…YAVG), 168–188 (FMPQ…VGTS), 199–219 (GLAI…AWAT), 236–256 (AGEL…FLWY), 263–283 (VFMG…IAVL), 288–308 (LLLV…ILQV), and 338–358 (VIVR…VTLK).

The protein belongs to the glycosyltransferase 4 family. MraY subfamily. Requires Mg(2+) as cofactor.

The protein localises to the cell inner membrane. It carries out the reaction UDP-N-acetyl-alpha-D-muramoyl-L-alanyl-gamma-D-glutamyl-meso-2,6-diaminopimeloyl-D-alanyl-D-alanine + di-trans,octa-cis-undecaprenyl phosphate = di-trans,octa-cis-undecaprenyl diphospho-N-acetyl-alpha-D-muramoyl-L-alanyl-D-glutamyl-meso-2,6-diaminopimeloyl-D-alanyl-D-alanine + UMP. It functions in the pathway cell wall biogenesis; peptidoglycan biosynthesis. Catalyzes the initial step of the lipid cycle reactions in the biosynthesis of the cell wall peptidoglycan: transfers peptidoglycan precursor phospho-MurNAc-pentapeptide from UDP-MurNAc-pentapeptide onto the lipid carrier undecaprenyl phosphate, yielding undecaprenyl-pyrophosphoryl-MurNAc-pentapeptide, known as lipid I. This chain is Phospho-N-acetylmuramoyl-pentapeptide-transferase, found in Actinobacillus pleuropneumoniae serotype 3 (strain JL03).